Consider the following 426-residue polypeptide: UPF0229 protein YeaH (426 aa).

Residues 78–92 (GNDHFIQNDRIERPQ) are compositionally biased toward basic and acidic residues. Residues 78 to 108 (GNDHFIQNDRIERPQDGGGSGSGNGQASQDG) form a disordered region.

This sequence belongs to the UPF0229 family.

This Salmonella arizonae (strain ATCC BAA-731 / CDC346-86 / RSK2980) protein is UPF0229 protein YeaH.